Consider the following 577-residue polypeptide: MSSASKSTPSAASGSSTSAAAAAAASVASGSASSSANVQEFKIRVPKMPKKHHVMRFNATLNVDFAQWRNVKLERENNMKEFRGMEEDQPKFGAGSEYNRDQREEARRKKFGIIARKYRPEAQPWILKVGGKTGKKFKGIREGGVGENAAFYVFTHAPDGAIEAYPLTEWYNFQPIQRYKSLSAEEAEQEFGRRKKVMNYFSLMLRKRLRGDEEEEQDPEEAKLIKAATKKSKELKITDMDEWIDSEDESDSEDEEDKKKKEQEDSDDGKAKGKGKKGADKKKKKRDVDDEAFEESDDGDEEGREMDYDTSSSEDEPDPEAKVDKDMKGVAEEDALRKLLTSDEEEDDEKKSDESDKEDADGEKKKKDKGKDEVSKDKKKKKPTKDDKKGKSNGSGDSSTDFSSDSTDSEDDLSNGPPKKKVVVKDKDKEKEKEKESAASSKVIASSSNANKSRSATPTLSTDASKRKMNSLPSDLTASDTSNSPTSTPAKRPKNEISTSLPTSFSGGKVEDYGITEEAVRRYLKRKPLTATELLTKFKNKKTPVSSDRLVETMTKILKKINPVKHTIQGKMYLWIK.

The interval 1–36 (MSSASKSTPSAASGSSTSAAAAAAASVASGSASSSA) is disordered. Phosphoserine is present on residues serine 183, serine 246, serine 250, and serine 252. The interval 236 to 508 (KITDMDEWID…TSLPTSFSGG (273 aa)) is disordered. The segment covering 240 to 256 (MDEWIDSEDESDSEDEE) has biased composition (acidic residues). Over residues 257–271 (DKKKKEQEDSDDGKA) the composition is skewed to basic and acidic residues. Over residues 272–285 (KGKGKKGADKKKKK) the composition is skewed to basic residues. Residues 289 to 304 (DDEAFEESDDGDEEGR) are compositionally biased toward acidic residues. Basic and acidic residues predominate over residues 319-341 (PEAKVDKDMKGVAEEDALRKLLT). Residue threonine 341 is modified to Phosphothreonine. Phosphoserine is present on residues serine 342, serine 352, and serine 355. Basic and acidic residues predominate over residues 362–376 (GEKKKKDKGKDEVSK). A compositionally biased stretch (low complexity) spans 392–406 (SNGSGDSSTDFSSDS). A compositionally biased stretch (basic and acidic residues) spans 423–437 (VVKDKDKEKEKEKES). The span at 438-456 (AASSKVIASSSNANKSRSA) shows a compositional bias: low complexity. Serine 453 and serine 455 each carry phosphoserine. Residue threonine 457 is modified to Phosphothreonine. Polar residues-rich tracts occupy residues 471–489 (SLPS…TSTP) and 496–506 (EISTSLPTSFS). Phosphoserine occurs at positions 482 and 484. Threonine 488 carries the post-translational modification Phosphothreonine.

Belongs to the TFIIF alpha subunit family. As to quaternary structure, heterodimer of an alpha and a beta subunit. In terms of processing, phosphorylated on Ser and other residues by TAF1 and casein kinase II-like kinases.

It is found in the nucleus. TFIIF is a general transcription initiation factor that binds to RNA polymerase II and helps to recruit it to the initiation complex in collaboration with TFIIB. It promotes transcription elongation. This Drosophila melanogaster (Fruit fly) protein is General transcription factor IIF subunit 1.